The following is a 150-amino-acid chain: Large ribosomal subunit protein bL9 (150 aa).

Belongs to the bacterial ribosomal protein bL9 family.

Functionally, binds to the 23S rRNA. The sequence is that of Large ribosomal subunit protein bL9 from Latilactobacillus sakei subsp. sakei (strain 23K) (Lactobacillus sakei subsp. sakei).